The primary structure comprises 182 residues: Adenine phosphoribosyltransferase (182 aa).

The protein belongs to the purine/pyrimidine phosphoribosyltransferase family. In terms of assembly, homodimer.

The protein resides in the cytoplasm. The enzyme catalyses AMP + diphosphate = 5-phospho-alpha-D-ribose 1-diphosphate + adenine. Its pathway is purine metabolism; AMP biosynthesis via salvage pathway; AMP from adenine: step 1/1. Catalyzes a salvage reaction resulting in the formation of AMP, that is energically less costly than de novo synthesis. This is Adenine phosphoribosyltransferase from Campylobacter fetus subsp. fetus (strain 82-40).